A 165-amino-acid chain; its full sequence is Small ribosomal subunit protein eS10 (165 aa).

Tyr-12 is modified (phosphotyrosine). The tract at residues 90 to 165 (VPATLRRSRP…FGRGRGQPPQ (76 aa)) is disordered. Basic and acidic residues predominate over residues 97–128 (SRPETGRPRPKGPEGERPARFTRGEADRDTYR). Residues Lys-138 and Lys-139 each participate in a glycyl lysine isopeptide (Lys-Gly) (interchain with G-Cter in ubiquitin) cross-link. Ser-146 is modified (phosphoserine). At Arg-153 the chain carries Omega-N-methylarginine. Residues 154 to 165 (GGFGRGRGQPPQ) are compositionally biased toward gly residues. Arg-158 and Arg-160 each carry symmetric dimethylarginine.

This sequence belongs to the eukaryotic ribosomal protein eS10 family. In terms of assembly, component of the small ribosomal subunit. The methylated form interacts with NPM1. Post-translationally, methylated by PRMT5. Methylation is necessary for its interaction with NPS1, its localization in the granular component (GC) region of the nucleolus, for the proper assembly of ribosomes, protein synthesis and optimal cell proliferation. Monoubiquitinated by ZNF598 when a ribosome has stalled during translation of poly(A) sequences, leading to preclude synthesis of a long poly-lysine tail and initiate the ribosome quality control (RQC) pathway to degrade the potentially detrimental aberrant nascent polypeptide. Deubiquitinated by OTUD3 and USP21, antagonizing ZNF598 activity. Deubiquitinated by OTUD1, antagonizing ZNF598 activity and stimulating formation of polysomes: deubiquitination by OTUD1 promotes stability and translation of a subset mRNAs with a high abundance of rare codons can limit the translation rate. Deubiquitinated by USP10.

It is found in the cytoplasm. It localises to the nucleus. The protein localises to the nucleolus. Its function is as follows. Component of the 40S ribosomal subunit. The ribosome is a large ribonucleoprotein complex responsible for the synthesis of proteins in the cell. This is Small ribosomal subunit protein eS10 (Rps10) from Rattus norvegicus (Rat).